A 553-amino-acid chain; its full sequence is Putative transport protein ASA_0825 (553 aa).

A run of 5 helical transmembrane segments spans residues 4 to 24 (IALSISMLSLVAVLGLWLGNW), 29 to 49 (VGLGIGGVLFGGIIVGHFAGV), 65 to 85 (FGLILFVYTIGIQVGPGFFSS), 95 to 115 (GFAALLVILGCVVAAGLHQLF), and 158 to 178 (MGYAVAYPFGICGILLTMWLV). 2 RCK C-terminal domains span residues 191–276 (DLFE…VLGE) and 279–361 (ETSL…VVGN). A run of 6 helical transmembrane segments spans residues 371-391 (MLPVFIGIGLGVLLGSIPFYL), 403-425 (AGGPLVVALILSRIGSIGKLYWF), 439-459 (IVLFLAVVGFKSGAGFVDTLI), 465-485 (AWMMYGMAITLIPLLVVGVLA), 493-513 (YLTLCGLLAGSMTDPPALAFA), and 533-553 (LVMFLRIISPQLLAILLWAGV).

Belongs to the AAE transporter (TC 2.A.81) family. YidE subfamily.

Its subcellular location is the cell membrane. The sequence is that of Putative transport protein ASA_0825 from Aeromonas salmonicida (strain A449).